The chain runs to 306 residues: Protoheme IX farnesyltransferase (306 aa).

9 helical membrane passes run 32-52 (VVALLVLTALVGMSLSVPGAL), 58-78 (IPAMLGIGLLSSAAAAINHIV), 103-123 (NAIVFATSIALLGFIILYALV), 126-146 (LTAFLTLAGLVGYSFVYTMYL), 153-173 (NITIGGLAGAIPPLLGWTAMT), 180-200 (ALLLVLIIFTWTPPHFWALAI), 227-247 (ILLYTVLLFVVCLLPYLVGMS), 249-269 (WLYLIGACSLNLIFFGYAWQL), and 278-298 (AMATFKFSIIHLMLLFIILLL).

Belongs to the UbiA prenyltransferase family. Protoheme IX farnesyltransferase subfamily.

The protein resides in the cell inner membrane. The catalysed reaction is heme b + (2E,6E)-farnesyl diphosphate + H2O = Fe(II)-heme o + diphosphate. Its pathway is porphyrin-containing compound metabolism; heme O biosynthesis; heme O from protoheme: step 1/1. In terms of biological role, converts heme B (protoheme IX) to heme O by substitution of the vinyl group on carbon 2 of heme B porphyrin ring with a hydroxyethyl farnesyl side group. This chain is Protoheme IX farnesyltransferase, found in Colwellia psychrerythraea (strain 34H / ATCC BAA-681) (Vibrio psychroerythus).